The following is a 606-amino-acid chain: DNA mismatch repair protein MutL (606 aa).

Positions histidine 377 to arginine 401 are disordered.

It belongs to the DNA mismatch repair MutL/HexB family.

Its function is as follows. This protein is involved in the repair of mismatches in DNA. It is required for dam-dependent methyl-directed DNA mismatch repair. May act as a 'molecular matchmaker', a protein that promotes the formation of a stable complex between two or more DNA-binding proteins in an ATP-dependent manner without itself being part of a final effector complex. This Geobacter sulfurreducens (strain ATCC 51573 / DSM 12127 / PCA) protein is DNA mismatch repair protein MutL.